A 269-amino-acid chain; its full sequence is Tryptophan synthase alpha chain (269 aa).

Catalysis depends on proton acceptor residues Glu50 and Asp61.

This sequence belongs to the TrpA family. In terms of assembly, tetramer of two alpha and two beta chains.

It carries out the reaction (1S,2R)-1-C-(indol-3-yl)glycerol 3-phosphate + L-serine = D-glyceraldehyde 3-phosphate + L-tryptophan + H2O. It participates in amino-acid biosynthesis; L-tryptophan biosynthesis; L-tryptophan from chorismate: step 5/5. In terms of biological role, the alpha subunit is responsible for the aldol cleavage of indoleglycerol phosphate to indole and glyceraldehyde 3-phosphate. The protein is Tryptophan synthase alpha chain of Francisella tularensis subsp. tularensis (strain FSC 198).